The sequence spans 103 residues: Stefin-3 (103 aa).

The Secondary area of contact signature appears at 52–56 (QVVAG).

It belongs to the cystatin family.

It is found in the cytoplasm. This is an intracellular thiol proteinase inhibitor. This Mus musculus (Mouse) protein is Stefin-3 (Stfa3).